The sequence spans 569 residues: TBCC domain-containing protein 1 (569 aa).

Positions 304–435 (PRSHRIVVMS…LEDHMARTGL (132 aa)) constitute a C-CAP/cofactor C-like domain.

Belongs to the TBCC family.

The protein resides in the cytoplasm. It localises to the cytoskeleton. It is found in the microtubule organizing center. Its subcellular location is the centrosome. The protein localises to the spindle pole. Plays a role in the regulation of centrosome and Golgi apparatus positioning, with consequences on cell shape and cell migration. In Rattus norvegicus (Rat), this protein is TBCC domain-containing protein 1 (Tbccd1).